The following is a 618-amino-acid chain: DELLA protein SLN1 (618 aa).

The disordered stretch occupies residues 1–36 (MKREYQDGGGSGGGGDEMGSSRDKMMVSSSEAGEGE). Gly residues predominate over residues 7–17 (DGGGSGGGGDE). Residues 39-43 (DELLA) carry the DELLA motif motif. Disordered stretches follow at residues 106-137 (LNAP…YFDL) and 159-197 (APAD…GAAR). Pro residues predominate over residues 108–118 (APPPPLPPAPP). Low complexity-rich tracts occupy residues 119-128 (QLNASTSSTV) and 176-197 (TGGS…GAAR). One can recognise a GRAS domain in the interval 221-614 (VDTQEAGIRL…RPLIATSAWR (394 aa)). The leucine repeat I (LRI) stretch occupies residues 228–284 (IRLVHALLACAEAVQQENLSAAEALVKQIPLLAASQGGAMRKVAAYFGEALARRVFR). The LxCxE motif motif lies at 235–239 (LACAE). Positions 303–368 (HAHFYESCPY…GGPPSFRLTG (66 aa)) are VHIID. Residues 334–338 (VHVVD) carry the VHIID motif. A leucine repeat II (LRII) region spans residues 382–421 (QVGWKLAQFAHTIRVDFQYRGLVAATLADLEPFMLQPEGE). Residues 431–535 (IAVNSVFEMH…EVYLGRQICN (105 aa)) form a PFYRE region. The SAW stretch occupies residues 538 to 614 (ACEGTERTER…RPLIATSAWR (77 aa)).

The protein belongs to the GRAS family. DELLA subfamily. Post-translationally, phosphorylated. Ubiquitinated. Upon GA application it is ubiquitinated, leading to its subsequent degradation. In terms of tissue distribution, apparently restricted to regions where growth is occurring in the leaf blade. Localizes almost exclusively to the basal elongation zone (EZ) for the elongating blades of L1, L2 and L3. More detailed fractionation of the L3 blade shows that in cv. Himalaya, it is preferentially localized to the basal third of the EZ, but its presence can still be detected toward the end of the EZ (at protein level).

The protein localises to the nucleus. Functionally, probable transcriptional regulator that acts as a repressor of the gibberellin (GA) signaling pathway. Probably acts by participating in large multiprotein complexes that repress transcription of GA-inducible genes. Upon GA application, it is degraded by the proteasome, allowing the GA signaling pathway. Acts as a negative regulator of GAMYB gene expression. This Hordeum vulgare (Barley) protein is DELLA protein SLN1 (SLN1).